Here is a 244-residue protein sequence, read N- to C-terminus: Ribosome-inactivating protein cucurmosin (244 aa).

Catalysis depends on residues Tyr-70, Tyr-109, Glu-158, and Arg-161. Asn-189 and Asn-225 each carry an N-linked (GlcNAc...) asparagine glycan.

The protein belongs to the ribosome-inactivating protein family. Type 1 RIP subfamily. Post-translationally, the N-linked glycan consists of GlcNAc2Man3Xyl.

The enzyme catalyses Endohydrolysis of the N-glycosidic bond at one specific adenosine on the 28S rRNA.. Its function is as follows. Has cytotoxic activity towards cancer cells, but not normal cells. Inhibits the growth of the human leukemia cell line K562, the murine melanoma cell line B16 and the lung adenocarcinoma cell line A549 with IC(50) values of 88.1 nM, 63.4 nM and 359.3 nM respectively. In Cucurbita moschata (Winter crookneck squash), this protein is Ribosome-inactivating protein cucurmosin.